The sequence spans 192 residues: Protein GrpE (192 aa).

Residues 1–34 (MSSKEQKTPNEQVSEEMENTAEQQVEATQETGEC) are disordered. Positions 20 to 31 (TAEQQVEATQET) are enriched in polar residues.

Belongs to the GrpE family. In terms of assembly, homodimer.

It localises to the cytoplasm. In terms of biological role, participates actively in the response to hyperosmotic and heat shock by preventing the aggregation of stress-denatured proteins, in association with DnaK and GrpE. It is the nucleotide exchange factor for DnaK and may function as a thermosensor. Unfolded proteins bind initially to DnaJ; upon interaction with the DnaJ-bound protein, DnaK hydrolyzes its bound ATP, resulting in the formation of a stable complex. GrpE releases ADP from DnaK; ATP binding to DnaK triggers the release of the substrate protein, thus completing the reaction cycle. Several rounds of ATP-dependent interactions between DnaJ, DnaK and GrpE are required for fully efficient folding. The protein is Protein GrpE of Yersinia pestis.